The sequence spans 170 residues: Myosin regulatory light chain 2, skeletal muscle isoform (170 aa).

Ala2 bears the N,N,N-trimethylalanine mark. A phosphoserine mark is found at Ser16 and Ser17. Phosphothreonine is present on residues Thr26 and Thr36. The region spanning 26 to 61 (TQIQEFKEAFTVIDQNRDGIIDKEDLRDTFAAMGRL) is the EF-hand 1 domain. The Ca(2+) site is built by Asp39, Asn41, Asp43, and Asp50. The residue at position 76 (Ser76) is a Phosphoserine. 2 EF-hand domains span residues 96-131 (DPED…QCDR) and 132-167 (FSQE…GDAK). Residue Thr102 is modified to Phosphothreonine.

Myosin is a hexamer of 2 heavy chains and 4 light chains.

Functionally, plays a role in muscle contraction. The sequence is that of Myosin regulatory light chain 2, skeletal muscle isoform from Bos taurus (Bovine).